We begin with the raw amino-acid sequence, 552 residues long: Outer dynein arm protein 1 (552 aa).

The segment at 1–27 (MPSADATRGGGSAGSMGKGTLGAGDTL) is disordered. Residues 8–22 (RGGGSAGSMGKGTLG) show a composition bias toward gly residues. Coiled coils occupy residues 28-59 (GHKS…LENK), 120-260 (SAKE…QELL), and 331-395 (TLFN…YEKR). 2 disordered regions span residues 482-515 (NRII…TREH) and 528-552 (LETA…PTRR). Residues 493 to 506 (QEEEVEGLEPEPVE) are compositionally biased toward acidic residues.

The protein belongs to the ODA1/DCC2 family. Component of the outer dynein arm complex.

Its subcellular location is the cytoplasm. It localises to the cytoskeleton. It is found in the cilium axoneme. Component of the outer dynein arm complex required for assembly of the outer dynein arm-docking complex (ODA-DC) and the outer dynein arm onto the doublet microtubule. This Chlamydomonas reinhardtii (Chlamydomonas smithii) protein is Outer dynein arm protein 1 (ODA1).